Reading from the N-terminus, the 207-residue chain is Small ribosomal subunit protein uS4 (207 aa).

The interval 31 to 53 is disordered; sequence KAKFDSKPGQHGRTSGARTSDFG. Residues 97–160 enclose the S4 RNA-binding domain; sequence SRLDNVVYRM…KKQNRIVEAL (64 aa).

It belongs to the universal ribosomal protein uS4 family. As to quaternary structure, part of the 30S ribosomal subunit. Contacts protein S5. The interaction surface between S4 and S5 is involved in control of translational fidelity.

Its function is as follows. One of the primary rRNA binding proteins, it binds directly to 16S rRNA where it nucleates assembly of the body of the 30S subunit. With S5 and S12 plays an important role in translational accuracy. This Albidiferax ferrireducens (strain ATCC BAA-621 / DSM 15236 / T118) (Rhodoferax ferrireducens) protein is Small ribosomal subunit protein uS4.